Reading from the N-terminus, the 116-residue chain is MRHKHGYRKLGRTSSHRKALLKNLAIALIEHNKIETGIYKAKELRSYIEKLTTTARVGDFNAHRHVFAYLQNKEATHKLVTEIAPKYAQRNGGYTRIQRTTFRRGDASTLATIEFV.

This sequence belongs to the bacterial ribosomal protein bL17 family. Part of the 50S ribosomal subunit. Contacts protein L32.

This Helicobacter pylori (strain G27) protein is Large ribosomal subunit protein bL17.